Here is a 462-residue protein sequence, read N- to C-terminus: L-seryl-tRNA(Sec) selenium transferase (462 aa).

Lys-292 carries the post-translational modification N6-(pyridoxal phosphate)lysine.

The protein belongs to the SelA family. Pyridoxal 5'-phosphate is required as a cofactor.

The protein resides in the cytoplasm. The enzyme catalyses L-seryl-tRNA(Sec) + selenophosphate + H(+) = L-selenocysteinyl-tRNA(Sec) + phosphate. It functions in the pathway aminoacyl-tRNA biosynthesis; selenocysteinyl-tRNA(Sec) biosynthesis; selenocysteinyl-tRNA(Sec) from L-seryl-tRNA(Sec) (bacterial route): step 1/1. Converts seryl-tRNA(Sec) to selenocysteinyl-tRNA(Sec) required for selenoprotein biosynthesis. The polypeptide is L-seryl-tRNA(Sec) selenium transferase (Geobacter metallireducens (strain ATCC 53774 / DSM 7210 / GS-15)).